A 115-amino-acid polypeptide reads, in one-letter code: Type 3 secretion system chaperone PscG (115 aa).

Belongs to the YscG family. In terms of assembly, forms a stable heterotrimeric complex with PscE and PscF/SctF in the cytoplasm. Co-stabilized by PscE.

The protein localises to the cytoplasm. In terms of biological role, chaperone of the type III secretion system (T3SS), also called injectisome, which is used to inject bacterial effector proteins into eukaryotic host cells, facilitating the establishment and dissemination of infection. Along with PscE, prevents premature polymerization of the PscF/SctF needle protein within the cytoplasm. Required for type III secretion needle assembly. Also required for cytotoxicity by influencing PscF/SctF levels. The polypeptide is Type 3 secretion system chaperone PscG (pscG) (Pseudomonas aeruginosa (strain ATCC 15692 / DSM 22644 / CIP 104116 / JCM 14847 / LMG 12228 / 1C / PRS 101 / PAO1)).